The chain runs to 293 residues: Acetyl-coenzyme A carboxylase carboxyl transferase subunit beta (293 aa).

The 265-residue stretch at 29-293 (LWVKCSECSQ…GVKELAEANI (265 aa)) folds into the CoA carboxyltransferase N-terminal domain. 4 residues coordinate Zn(2+): Cys33, Cys36, Cys52, and Cys55. The C4-type zinc finger occupies 33-55 (CSECSQVAYRKDLISNFNVCSNC).

This sequence belongs to the AccD/PCCB family. In terms of assembly, acetyl-CoA carboxylase is a heterohexamer composed of biotin carboxyl carrier protein (AccB), biotin carboxylase (AccC) and two subunits each of ACCase subunit alpha (AccA) and ACCase subunit beta (AccD). Zn(2+) serves as cofactor.

The protein localises to the cytoplasm. The enzyme catalyses N(6)-carboxybiotinyl-L-lysyl-[protein] + acetyl-CoA = N(6)-biotinyl-L-lysyl-[protein] + malonyl-CoA. Its pathway is lipid metabolism; malonyl-CoA biosynthesis; malonyl-CoA from acetyl-CoA: step 1/1. Functionally, component of the acetyl coenzyme A carboxylase (ACC) complex. Biotin carboxylase (BC) catalyzes the carboxylation of biotin on its carrier protein (BCCP) and then the CO(2) group is transferred by the transcarboxylase to acetyl-CoA to form malonyl-CoA. The chain is Acetyl-coenzyme A carboxylase carboxyl transferase subunit beta from Prochlorococcus marinus (strain MIT 9312).